Here is a 222-residue protein sequence, read N- to C-terminus: Endonuclease V (222 aa).

Mg(2+)-binding residues include aspartate 43 and aspartate 109.

This sequence belongs to the endonuclease V family. Requires Mg(2+) as cofactor.

Its subcellular location is the cytoplasm. The enzyme catalyses Endonucleolytic cleavage at apurinic or apyrimidinic sites to products with a 5'-phosphate.. Functionally, DNA repair enzyme involved in the repair of deaminated bases. Selectively cleaves double-stranded DNA at the second phosphodiester bond 3' to a deoxyinosine leaving behind the intact lesion on the nicked DNA. This chain is Endonuclease V, found in Roseiflexus castenholzii (strain DSM 13941 / HLO8).